A 469-amino-acid chain; its full sequence is UDP-N-acetylmuramate--L-alanine ligase (469 aa).

Residue 119–125 (GTHGKTT) participates in ATP binding.

It belongs to the MurCDEF family.

It localises to the cytoplasm. It carries out the reaction UDP-N-acetyl-alpha-D-muramate + L-alanine + ATP = UDP-N-acetyl-alpha-D-muramoyl-L-alanine + ADP + phosphate + H(+). It participates in cell wall biogenesis; peptidoglycan biosynthesis. Cell wall formation. This is UDP-N-acetylmuramate--L-alanine ligase from Vesicomyosocius okutanii subsp. Calyptogena okutanii (strain HA).